A 106-amino-acid chain; its full sequence is RxLR effector protein PSR1 (106 aa).

The N-terminal stretch at 1–20 (MRLTYVLLVAVTTLLVSCDA) is a signal peptide. The RxLR-dEER motif lies at 33–46 (RLLRFVEAADEEER). Residues 50-106 (FSPEKLRKMLGDETYRLKKFGKWDSDGHTFDGLKHYLLLSDSSMVKLRNMYKAWLEQ) form a WY domain region. The short motif at 56–69 (RKMLGDETYRLKKF) is the Bipartite nuclear localization signal (NLS) element.

This sequence belongs to the RxLR effector family. As to quaternary structure, interacts with host PINP1.

It localises to the secreted. It is found in the host nucleus. Functionally, secreted effector that possesses RNA silencing suppression activity by inhibiting the biogenesis of small RNAs in the host plant to promote enhanced susceptibility of host to the pathogen during infection. Interferes with secondary siRNA production by associating with host nuclear protein PINP1 that acts as a regulator of the accumulation of both microRNAs and endogenous small interfering RNAs. The sequence is that of RxLR effector protein PSR1 from Phytophthora sojae (Soybean stem and root rot agent).